The sequence spans 131 residues: Phosphoribosyl-AMP cyclohydrolase (131 aa).

A Mg(2+)-binding site is contributed by Asp89. Cys90 contacts Zn(2+). Mg(2+) contacts are provided by Asp91 and Asp93. Cys106 and Cys113 together coordinate Zn(2+).

It belongs to the PRA-CH family. In terms of assembly, homodimer. It depends on Mg(2+) as a cofactor. The cofactor is Zn(2+).

It is found in the cytoplasm. It carries out the reaction 1-(5-phospho-beta-D-ribosyl)-5'-AMP + H2O = 1-(5-phospho-beta-D-ribosyl)-5-[(5-phospho-beta-D-ribosylamino)methylideneamino]imidazole-4-carboxamide. Its pathway is amino-acid biosynthesis; L-histidine biosynthesis; L-histidine from 5-phospho-alpha-D-ribose 1-diphosphate: step 3/9. Its function is as follows. Catalyzes the hydrolysis of the adenine ring of phosphoribosyl-AMP. The sequence is that of Phosphoribosyl-AMP cyclohydrolase from Pyrobaculum aerophilum (strain ATCC 51768 / DSM 7523 / JCM 9630 / CIP 104966 / NBRC 100827 / IM2).